Reading from the N-terminus, the 537-residue chain is Woronin body major protein hexA (537 aa).

3 stretches are compositionally biased toward basic and acidic residues: residues 1-17 (MYSV…RDAQ), 59-70 (DRTSHVEREDTR), and 116-134 (DSRV…RSEN). Disordered stretches follow at residues 1 to 20 (MYSV…QRTA), 59 to 79 (DRTS…PDPR), 116 to 200 (DSRV…KPVY), and 269 to 295 (PKPL…SRPS). The segment covering 135-144 (NAKQNKNKNN) has biased composition (low complexity). Basic and acidic residues predominate over residues 272–281 (LETRKGDSFS).

This sequence belongs to the eIF-5A family. Hex1 subfamily. In terms of assembly, forms oligomers. Self-assembles into hexagonal rods. Binds directly or indirectly to the Woronin body tether lah.

Its subcellular location is the cell septum. It localises to the cytoplasm. In terms of biological role, major component of Woronin bodies, fungal-specific organelles that occlude septal pores in order to separate intact from damaged compartments. HexA binds directly or indirectly to the Woronin body tether that in turn is anchored at the rim of the septal pore. Woronin bodies are important for stress resistance and virulence. In Aspergillus fumigatus (strain ATCC MYA-4609 / CBS 101355 / FGSC A1100 / Af293) (Neosartorya fumigata), this protein is Woronin body major protein hexA.